Reading from the N-terminus, the 300-residue chain is uncharacterized protein (300 aa).

Residues 230–251 (LRQSTSRQSISRQSISRQSTSR) form a disordered region. A compositionally biased stretch (low complexity) spans 231–251 (RQSTSRQSISRQSISRQSTSR).

This is an uncharacterized protein from Acanthamoeba polyphaga (Amoeba).